A 510-amino-acid chain; its full sequence is Hyaluronidase PH-20 (510 aa).

An N-terminal signal peptide occupies residues 1 to 35 (MGVLKFKHIFFRSFVKSSGVSQIVFTFLLIPCCLT). Cystine bridges form between cysteine 60–cysteine 351 and cysteine 224–cysteine 238. Residue asparagine 82 is glycosylated (N-linked (GlcNAc...) asparagine). The active-site Proton donor is the glutamate 148. N-linked (GlcNAc...) asparagine glycans are attached at residues asparagine 166, asparagine 235, asparagine 254, and asparagine 368. Disulfide bonds link cysteine 376–cysteine 387, cysteine 381–cysteine 435, and cysteine 437–cysteine 464. N-linked (GlcNAc...) asparagine glycosylation is found at asparagine 393, asparagine 440, and asparagine 484. The GPI-anchor amidated serine moiety is linked to residue serine 491. A propeptide spans 492 to 510 (TTMFIVNILFLIISSVASL) (removed in mature form).

It belongs to the glycosyl hydrolase 56 family. In terms of tissue distribution, testis.

The protein resides in the cell membrane. It catalyses the reaction Random hydrolysis of (1-&gt;4)-linkages between N-acetyl-beta-D-glucosamine and D-glucuronate residues in hyaluronate.. Its function is as follows. Involved in sperm-egg adhesion. Upon fertilization sperm must first penetrate a layer of cumulus cells that surrounds the egg before reaching the zona pellucida. The cumulus cells are embedded in a matrix containing hyaluronic acid which is formed prior to ovulation. This protein aids in penetrating the layer of cumulus cells by digesting hyaluronic acid. The sequence is that of Hyaluronidase PH-20 (SPAM1) from Macaca fascicularis (Crab-eating macaque).